We begin with the raw amino-acid sequence, 535 residues long: UDP-glycosyltransferase stmC (535 aa).

N-linked (GlcNAc...) asparagine glycosylation is found at Asn-70 and Asn-422. The helical transmembrane segment at 506-526 (ASNLDLYIVCIAFVAVPVGVA) threads the bilayer.

It belongs to the glycosyltransferase 28 family.

Its subcellular location is the membrane. It catalyses the reaction stromemycin aglycone + UDP-alpha-D-glucose = stromemycin + UDP + H(+). The enzyme catalyses exophillate aglycone + UDP-alpha-D-glucose = exophillate + UDP + H(+). It participates in mycotoxin biosynthesis. In terms of biological role, UDP-glycosyltransferase; part of the gene cluster that mediates the biosynthesis of stromemycin, a depside C-glucoside with two unsaturated C9 side chains belonging to aromatic polyketide glycosides. Acts as the tailoring enzyme responsible for 3-C-glucosylation of bininalkenylresorcylic acid produced by the combined action of the HR-PKS stmA and the NR-PKS stmB to yield stromemycin. Possesses a relatively strict acceptor specificity towards bininalkenylresorcylic acid for C-glycosylation, but is able to use several donors including UDP-alpha-D-galactose, UDP-alpha-D-xylose, UDP-alpha-D-4-keto-6-deoxyglucose, UDP-alpha-D-quinovose, and UDP-beta-L-rhamnose. In Aspergillus ustus, this protein is UDP-glycosyltransferase stmC.